A 130-amino-acid chain; its full sequence is Small ribosomal subunit protein uS9 (130 aa).

This sequence belongs to the universal ribosomal protein uS9 family.

The polypeptide is Small ribosomal subunit protein uS9 (Pseudomonas putida (strain W619)).